A 70-amino-acid chain; its full sequence is U2-agatoxin-Ao1d (70 aa).

Residues 1–20 (MRAIIYLLLISAMVFSMTKA) form the signal peptide. The propeptide occupies 21-34 (VPEEEGLQLSEDER). 3 cysteine pairs are disulfide-bonded: cysteine 37–cysteine 53, cysteine 44–cysteine 58, and cysteine 52–cysteine 68. Leucine 69 carries the post-translational modification Leucine amide.

Belongs to the neurotoxin 01 (U2-agtx) family. In terms of tissue distribution, expressed by the venom gland.

It localises to the secreted. In terms of biological role, insect active toxin causing rapid but reversible paralysis in crickets. No activity shown in mammals. Does not show effect on mammalian voltage-gated calcium channels. This Agelena orientalis (Funnel-web spider) protein is U2-agatoxin-Ao1d.